Here is a 338-residue protein sequence, read N- to C-terminus: uncharacterized protein (338 aa).

The region spanning 144-321 (HTLPVDVKAV…RAARVGLWAS (178 aa)) is the TNase-like domain. Catalysis depends on residues Arg228, Glu236, and Arg270.

This is an uncharacterized protein from Capnoides sempervirens (Rock-harlequin).